The sequence spans 169 residues: Mu-like prophage FluMu host-nuclease inhibitor protein gam (169 aa).

To phage Mu protein gam.

Its function is as follows. Protects linear double-stranded DNA of Mu genome from exonuclease degradation. In Haemophilus influenzae (strain ATCC 51907 / DSM 11121 / KW20 / Rd), this protein is Mu-like prophage FluMu host-nuclease inhibitor protein gam.